A 179-amino-acid polypeptide reads, in one-letter code: Shikimate kinase (179 aa).

14-19 (GAGKTT) provides a ligand contact to ATP. Thr-18 is a Mg(2+) binding site. 3 residues coordinate substrate: Asp-36, Arg-60, and Gly-82. An ATP-binding site is contributed by Arg-120. Substrate is bound at residue Arg-139.

This sequence belongs to the shikimate kinase family. As to quaternary structure, monomer. Requires Mg(2+) as cofactor.

The protein localises to the cytoplasm. The enzyme catalyses shikimate + ATP = 3-phosphoshikimate + ADP + H(+). It functions in the pathway metabolic intermediate biosynthesis; chorismate biosynthesis; chorismate from D-erythrose 4-phosphate and phosphoenolpyruvate: step 5/7. Functionally, catalyzes the specific phosphorylation of the 3-hydroxyl group of shikimic acid using ATP as a cosubstrate. This Methylococcus capsulatus (strain ATCC 33009 / NCIMB 11132 / Bath) protein is Shikimate kinase.